A 306-amino-acid polypeptide reads, in one-letter code: Extensin (306 aa).

The first 32 residues, 1 to 32 (MGRIARGSKMSSLIVSLLVVLVSLNLASETTA), serve as a signal peptide directing secretion. Residues 33-306 (KYTYSSPPPP…YTSPPPPHHY (274 aa)) are disordered. Pro residues-rich tracts occupy residues 38 to 122 (SPPP…PKHS), 133 to 152 (SPPPPTPVYKYKSPPPPKHS), 183 to 214 (SPPPPTPVYKYKSPPPPTPVYKYKSPPPPKHS), and 225 to 290 (SPPP…SPPP).

Post-translationally, hydroxylated on proline residues in the S-P-P-P-P repeat. In terms of processing, O-glycosylated on hydroxyprolines.

The protein resides in the secreted. It localises to the primary cell wall. Its function is as follows. Structural component in primary cell wall. This chain is Extensin, found in Daucus carota (Wild carrot).